A 906-amino-acid polypeptide reads, in one-letter code: Probable RNA-directed DNA polymerase from transposon BS (906 aa).

The region spanning 482 to 758 (AILRVQFFPK…SQAKYLGITL (277 aa)) is the Reverse transcriptase domain.

Requires Mg(2+) as cofactor. Mn(2+) is required as a cofactor.

It carries out the reaction DNA(n) + a 2'-deoxyribonucleoside 5'-triphosphate = DNA(n+1) + diphosphate. The sequence is that of Probable RNA-directed DNA polymerase from transposon BS from Drosophila melanogaster (Fruit fly).